Consider the following 223-residue polypeptide: Small ribosomal subunit protein uS3 (223 aa).

Positions 39–117 (IREFLRKKPS…RPELNAKLVA (79 aa)) constitute a KH type-2 domain.

The protein belongs to the universal ribosomal protein uS3 family. As to quaternary structure, part of the 30S ribosomal subunit. Forms a tight complex with proteins S10 and S14.

Functionally, binds the lower part of the 30S subunit head. Binds mRNA in the 70S ribosome, positioning it for translation. The sequence is that of Small ribosomal subunit protein uS3 from Chlamydia abortus (strain DSM 27085 / S26/3) (Chlamydophila abortus).